The chain runs to 60 residues: DNA-binding protein 7c (60 aa).

Residues 37 to 60 (DNGKTGRGAVSEKDAPKELLEKLK) form a disordered region. The span at 46–60 (VSEKDAPKELLEKLK) shows a compositional bias: basic and acidic residues.

This sequence belongs to the 7 kDa DNA-binding/endoribonuclease P2 family. Monomer.

Its subcellular location is the cytoplasm. Can constrain negative DNA supercoils. May be involved in maintaining the integrity of the genome at high temperature. This chain is DNA-binding protein 7c, found in Acidianus hospitalis (strain W1).